Here is an 828-residue protein sequence, read N- to C-terminus: Periplasmic nitrate reductase (828 aa).

The tat-type signal signal peptide spans 1 to 31 (MKLSRRGFMKANAVAAAAAAAGLSVPGVARA). In terms of domain architecture, 4Fe-4S Mo/W bis-MGD-type spans 39-95 (IKWDKAPCRFCGTGCGVLVGTQQGRVVACQGDPDAPVNRGLNCIKGYFLPKIMYGED). Residues cysteine 46, cysteine 49, cysteine 53, and cysteine 81 each contribute to the [4Fe-4S] cluster site. Residues lysine 83, glutamine 150, asparagine 175, cysteine 179, 212 to 219 (WGANMAEM), 243 to 247 (STYQH), 262 to 264 (QSD), methionine 372, glutamine 376, asparagine 482, 508 to 509 (SD), lysine 531, aspartate 558, and 718 to 727 (TGRVLEHWHT) each bind Mo-bis(molybdopterin guanine dinucleotide). Position 794 (phenylalanine 794) interacts with substrate. Mo-bis(molybdopterin guanine dinucleotide) contacts are provided by asparagine 802 and lysine 819.

It belongs to the prokaryotic molybdopterin-containing oxidoreductase family. NasA/NapA/NarB subfamily. Component of the periplasmic nitrate reductase NapAB complex composed of NapA and NapB. Requires [4Fe-4S] cluster as cofactor. Mo-bis(molybdopterin guanine dinucleotide) serves as cofactor. In terms of processing, predicted to be exported by the Tat system. The position of the signal peptide cleavage has not been experimentally proven.

The protein resides in the periplasm. It carries out the reaction 2 Fe(II)-[cytochrome] + nitrate + 2 H(+) = 2 Fe(III)-[cytochrome] + nitrite + H2O. Functionally, catalytic subunit of the periplasmic nitrate reductase complex NapAB. Receives electrons from NapB and catalyzes the reduction of nitrate to nitrite. This is Periplasmic nitrate reductase from Shigella dysenteriae serotype 1 (strain Sd197).